Reading from the N-terminus, the 228-residue chain is 2-C-methyl-D-erythritol 4-phosphate cytidylyltransferase (228 aa).

It belongs to the IspD/TarI cytidylyltransferase family. IspD subfamily.

The catalysed reaction is 2-C-methyl-D-erythritol 4-phosphate + CTP + H(+) = 4-CDP-2-C-methyl-D-erythritol + diphosphate. It functions in the pathway isoprenoid biosynthesis; isopentenyl diphosphate biosynthesis via DXP pathway; isopentenyl diphosphate from 1-deoxy-D-xylulose 5-phosphate: step 2/6. In terms of biological role, catalyzes the formation of 4-diphosphocytidyl-2-C-methyl-D-erythritol from CTP and 2-C-methyl-D-erythritol 4-phosphate (MEP). This is 2-C-methyl-D-erythritol 4-phosphate cytidylyltransferase from Halalkalibacterium halodurans (strain ATCC BAA-125 / DSM 18197 / FERM 7344 / JCM 9153 / C-125) (Bacillus halodurans).